The sequence spans 718 residues: Peroxisomal bifunctional enzyme (718 aa).

Residues 2 to 280 form an enoyl-CoA hydratase / isomerase region; the sequence is ARYELVKRSV…FAQRTAEKWT (279 aa). Residue Gly100 participates in substrate binding. A 3-hydroxyacyl-CoA dehydrogenase region spans residues 281 to 567; the sequence is LPSGAQWNNS…DMVCQQGRFG (287 aa). Residues 716-718 carry the Microbody targeting signal motif; that stretch reads SHL.

The protein in the N-terminal section; belongs to the enoyl-CoA hydratase/isomerase family. In the C-terminal section; belongs to the 3-hydroxyacyl-CoA dehydrogenase family. Monomer.

The protein resides in the peroxisome. It catalyses the reaction a (3S)-3-hydroxyacyl-CoA = a (2E)-enoyl-CoA + H2O. The enzyme catalyses a 4-saturated-(3S)-3-hydroxyacyl-CoA = a (3E)-enoyl-CoA + H2O. The catalysed reaction is a (3Z)-enoyl-CoA = a 4-saturated (2E)-enoyl-CoA. It carries out the reaction a (3E)-enoyl-CoA = a 4-saturated (2E)-enoyl-CoA. It catalyses the reaction a (3S)-3-hydroxyacyl-CoA + NAD(+) = a 3-oxoacyl-CoA + NADH + H(+). The enzyme catalyses (2S,3S)-3-hydroxy-2-methylbutanoyl-CoA = (2E)-2-methylbut-2-enoyl-CoA + H2O. The catalysed reaction is (3S)-hydroxyhexadecanoyl-CoA + NAD(+) = 3-oxohexadecanoyl-CoA + NADH + H(+). It carries out the reaction (3S)-hydroxyhexadecanoyl-CoA = (2E)-hexadecenoyl-CoA + H2O. It catalyses the reaction (2E)-hexadecenedioyl-CoA + H2O = (3S)-hydroxyhexadecanedioyl-CoA. The enzyme catalyses (3S)-hydroxyhexadecanedioyl-CoA + NAD(+) = 3-oxohexadecanedioyl-CoA + NADH + H(+). The catalysed reaction is (3E,5Z)-tetradecadienoyl-CoA = (2E,5Z)-tetradecadienoyl-CoA. It carries out the reaction (3E,5Z)-octadienoyl-CoA = (2E,5Z)-octadienoyl-CoA. It catalyses the reaction (3S)-hydroxydecanoyl-CoA + NAD(+) = 3-oxodecanoyl-CoA + NADH + H(+). The enzyme catalyses (3E)-decenoyl-CoA = (2E)-decenoyl-CoA. The catalysed reaction is (3Z)-hexenoyl-CoA = (2E)-hexenoyl-CoA. It carries out the reaction (3E)-hexenoyl-CoA = (2E)-hexenoyl-CoA. It catalyses the reaction (3S)-hydroxydecanoyl-CoA = (2E)-decenoyl-CoA + H2O. The enzyme catalyses (3S)-hydroxyhexanoyl-CoA = (2E)-hexenoyl-CoA + H2O. Its pathway is lipid metabolism; fatty acid beta-oxidation. Functionally, peroxisomal trifunctional enzyme possessing 2-enoyl-CoA hydratase, 3-hydroxyacyl-CoA dehydrogenase, and delta 3, delta 2-enoyl-CoA isomerase activities. Catalyzes two of the four reactions of the long straight chain fatty acids peroxisomal beta-oxidation pathway. Can also use branched-chain fatty acids such as 2-methyl-2E-butenoyl-CoA as a substrate, which is hydrated into (2S,3S)-3-hydroxy-2-methylbutanoyl-CoA. Optimal isomerase for 2,5 double bonds into 3,5 form isomerization in a range of enoyl-CoA species. Also able to isomerize both 3-cis and 3-trans double bonds into the 2-trans form in a range of enoyl-CoA species. Regulates the amount of medium-chain dicarboxylic fatty acids which are essential regulators of all fatty acid oxidation pathways. Also involved in the degradation of long-chain dicarboxylic acids through peroxisomal beta-oxidation. The chain is Peroxisomal bifunctional enzyme (ehhadh) from Danio rerio (Zebrafish).